The chain runs to 471 residues: Ribosomal protein uS12 methylthiotransferase RimO (471 aa).

Residues 2–122 enclose the MTTase N-terminal domain; it reads IKVSLISLGC…VAPIIQEIYA (121 aa). [4Fe-4S] cluster is bound by residues Cys11, Cys47, Cys84, Cys166, Cys170, and Cys173. In terms of domain architecture, Radical SAM core spans 152–395; the sequence is LTPKHFAYVK…MALQKQIAAD (244 aa). In terms of domain architecture, TRAM spans 398 to 458; sequence KTYVGRTLRV…DYDLLALPPG (61 aa).

The protein belongs to the methylthiotransferase family. RimO subfamily. Requires [4Fe-4S] cluster as cofactor.

The protein localises to the cytoplasm. It catalyses the reaction L-aspartate(89)-[ribosomal protein uS12]-hydrogen + (sulfur carrier)-SH + AH2 + 2 S-adenosyl-L-methionine = 3-methylsulfanyl-L-aspartate(89)-[ribosomal protein uS12]-hydrogen + (sulfur carrier)-H + 5'-deoxyadenosine + L-methionine + A + S-adenosyl-L-homocysteine + 2 H(+). In terms of biological role, catalyzes the methylthiolation of an aspartic acid residue of ribosomal protein uS12. This chain is Ribosomal protein uS12 methylthiotransferase RimO, found in Opitutus terrae (strain DSM 11246 / JCM 15787 / PB90-1).